Reading from the N-terminus, the 169-residue chain is Ribosome maturation factor RimM (169 aa).

The region spanning 94 to 167 is the PRC barrel domain; the sequence is ENEFYFHEII…KITIEVMEGL (74 aa).

Belongs to the RimM family. As to quaternary structure, binds ribosomal protein uS19.

The protein resides in the cytoplasm. An accessory protein needed during the final step in the assembly of 30S ribosomal subunit, possibly for assembly of the head region. Essential for efficient processing of 16S rRNA. May be needed both before and after RbfA during the maturation of 16S rRNA. It has affinity for free ribosomal 30S subunits but not for 70S ribosomes. The chain is Ribosome maturation factor RimM from Listeria monocytogenes serotype 4b (strain F2365).